Consider the following 320-residue polypeptide: o-succinylbenzoate synthase (320 aa).

The Proton donor role is filled by K133. D161, E190, and D213 together coordinate Mg(2+). Catalysis depends on K235, which acts as the Proton acceptor.

The protein belongs to the mandelate racemase/muconate lactonizing enzyme family. MenC type 1 subfamily. The cofactor is a divalent metal cation.

The catalysed reaction is (1R,6R)-6-hydroxy-2-succinyl-cyclohexa-2,4-diene-1-carboxylate = 2-succinylbenzoate + H2O. The protein operates within quinol/quinone metabolism; 1,4-dihydroxy-2-naphthoate biosynthesis; 1,4-dihydroxy-2-naphthoate from chorismate: step 4/7. It functions in the pathway quinol/quinone metabolism; menaquinone biosynthesis. Converts 2-succinyl-6-hydroxy-2,4-cyclohexadiene-1-carboxylate (SHCHC) to 2-succinylbenzoate (OSB). The chain is o-succinylbenzoate synthase from Escherichia coli (strain K12 / MC4100 / BW2952).